A 631-amino-acid chain; its full sequence is Phosphomethylpyrimidine synthase (631 aa).

Residues asparagine 239, methionine 268, tyrosine 297, histidine 333, 353–355 (SRG), 394–397 (DGLR), and glutamate 433 contribute to the substrate site. Histidine 437 contacts Zn(2+). Tyrosine 460 is a substrate binding site. Histidine 501 is a binding site for Zn(2+). Positions 581, 584, and 589 each coordinate [4Fe-4S] cluster.

This sequence belongs to the ThiC family. In terms of assembly, homodimer. [4Fe-4S] cluster serves as cofactor.

It carries out the reaction 5-amino-1-(5-phospho-beta-D-ribosyl)imidazole + S-adenosyl-L-methionine = 4-amino-2-methyl-5-(phosphooxymethyl)pyrimidine + CO + 5'-deoxyadenosine + formate + L-methionine + 3 H(+). Its pathway is cofactor biosynthesis; thiamine diphosphate biosynthesis. Functionally, catalyzes the synthesis of the hydroxymethylpyrimidine phosphate (HMP-P) moiety of thiamine from aminoimidazole ribotide (AIR) in a radical S-adenosyl-L-methionine (SAM)-dependent reaction. The sequence is that of Phosphomethylpyrimidine synthase from Escherichia coli O81 (strain ED1a).